The chain runs to 315 residues: Putative serine/threonine-protein phosphatase PP2A-4 catalytic subunit (315 aa).

Mn(2+) is bound by residues Asp63, His65, Asp91, and Asn123. His124 (proton donor) is an active-site residue. Mn(2+)-binding residues include His173 and His247.

This sequence belongs to the PPP phosphatase family. PP-2A subfamily. Mn(2+) is required as a cofactor.

Its subcellular location is the cytoplasm. The catalysed reaction is O-phospho-L-seryl-[protein] + H2O = L-seryl-[protein] + phosphate. It carries out the reaction O-phospho-L-threonyl-[protein] + H2O = L-threonyl-[protein] + phosphate. The chain is Putative serine/threonine-protein phosphatase PP2A-4 catalytic subunit (PP2A4) from Oryza sativa subsp. indica (Rice).